The following is a 63-amino-acid chain: TAGATGATRQDGSTDAFEKREKAQEDLYIRQHEKEQLEALKESLKKQKKSLDDLEBKIDDLTK.

Residues 1 to 23 (TAGATGATRQDGSTDAFEKREKA) are disordered. Residues 18-62 (EKREKAQEDLYIRQHEKEQLEALKESLKKQKKSLDDLEBKIDDLT) adopt a coiled-coil conformation.

This sequence belongs to the ATPase inhibitor family.

Its subcellular location is the mitochondrion. Its function is as follows. This protein forms a one-to-one complex with ATPase to inhibit the enzyme activity completely. The protein is ATPase inhibitor, mitochondrial of Cyberlindnera jadinii (Torula yeast).